The chain runs to 134 residues: ATP synthase epsilon chain (134 aa).

This sequence belongs to the ATPase epsilon chain family. As to quaternary structure, F-type ATPases have 2 components, CF(1) - the catalytic core - and CF(0) - the membrane proton channel. CF(1) has five subunits: alpha(3), beta(3), gamma(1), delta(1), epsilon(1). CF(0) has three main subunits: a, b and c.

It localises to the cellular thylakoid membrane. Produces ATP from ADP in the presence of a proton gradient across the membrane. This Prochlorococcus marinus (strain MIT 9312) protein is ATP synthase epsilon chain.